Consider the following 226-residue polypeptide: Exosome complex component rrp46 (226 aa).

The segment at asparagine 205–alanine 226 is disordered. The segment covering serine 207–aspartate 219 has biased composition (basic and acidic residues).

Belongs to the RNase PH family. As to quaternary structure, component of the RNA exosome complex. Specifically part of the catalytically inactive RNA exosome core complex (Exo-9) which may associate with the catalytic subunits rrp6 and dis3 in cytoplasmic- and nuclear-specific RNA exosome complex forms. Exo-9 is formed by a hexameric base ring of RNase PH domain-containing subunits and a cap ring consisting of csl4, rrp4 and rrp40.

The protein resides in the cytoplasm. It is found in the nucleus. It localises to the nucleolus. Non-catalytic component of the RNA exosome complex which has 3'-&gt;5' exoribonuclease activity and participates in a multitude of cellular RNA processing and degradation events. In the nucleus, the RNA exosome complex is involved in proper maturation of stable RNA species such as rRNA, snRNA and snoRNA, in the elimination of RNA processing by-products and non-coding 'pervasive' transcripts, such as antisense RNA species and cryptic unstable transcripts (CUTs), and of mRNAs with processing defects, thereby limiting or excluding their export to the cytoplasm. In the cytoplasm, the RNA exosome complex is involved in general mRNA turnover and in RNA surveillance pathways, preventing translation of aberrant mRNAs. The catalytic inactive RNA exosome core complex of 9 subunits (Exo-9) is proposed to play a pivotal role in the binding and presentation of RNA for ribonucleolysis, and to serve as a scaffold for the association with catalytic subunits and accessory proteins or complexes. ski6 is part of the hexameric ring of RNase PH domain-containing subunits proposed to form a central channel which threads RNA substrates for degradation. The polypeptide is Exosome complex component rrp46 (rrp46) (Schizosaccharomyces pombe (strain 972 / ATCC 24843) (Fission yeast)).